The chain runs to 793 residues: DnaJ homolog subfamily C member 10 (793 aa).

The signal sequence occupies residues 1 to 32 (MGVWLSKDDYIRDLKRIILCFLIVYMAILVGT). One can recognise a J domain in the interval 35–100 (DFYSLLGVSK…DLRKKYDKYG (66 aa)). The Thioredoxin 1 domain occupies 130–232 (EIITLERREF…ESLVSFAMQH (103 aa)). Cysteine 158 and cysteine 161 are disulfide-bonded. Trxb stretches follow at residues 235–350 (STVT…LPDF) and 348–463 (PDFE…PQNF). 3 consecutive Thioredoxin domains span residues 454 to 553 (HVTT…IEDL), 557 to 662 (SVVS…SLRI), and 671 to 778 (VSTG…INEK). A disulfide bond links cysteine 480 and cysteine 483. N-linked (GlcNAc...) asparagine glycosylation is present at asparagine 530. 2 disulfides stabilise this stretch: cysteine 588–cysteine 591 and cysteine 700–cysteine 703. The Prevents secretion from ER motif lies at 790–793 (KDEL).

As to quaternary structure, interacts with HSPA5 (via its J domain). Interacts with EDEM1.

The protein resides in the endoplasmic reticulum lumen. In terms of biological role, endoplasmic reticulum disulfide reductase involved both in the correct folding of proteins and degradation of misfolded proteins. Required for efficient folding of proteins in the endoplasmic reticulum by catalyzing the removal of non-native disulfide bonds formed during the folding of proteins, such as LDLR. Also involved in endoplasmic reticulum-associated degradation (ERAD) by reducing incorrect disulfide bonds in misfolded glycoproteins recognized by EDEM1. Interaction with HSPA5 is required its activity, not for the disulfide reductase activity, but to facilitate the release of DNAJC10 from its substrate. Promotes apoptotic signaling pathway in response to endoplasmic reticulum stress. This Pongo abelii (Sumatran orangutan) protein is DnaJ homolog subfamily C member 10 (DNAJC10).